Reading from the N-terminus, the 802-residue chain is G-type lectin S-receptor-like serine/threonine-protein kinase At1g61550 (802 aa).

The N-terminal stretch at M1–A19 is a signal peptide. The region spanning A20–F139 is the Bulb-type lectin domain. Residues A20–T421 are Extracellular-facing. N48, N89, N112, N231, and N262 each carry an N-linked (GlcNAc...) asparagine glycan. Residues P273–E309 form the EGF-like domain. 2 disulfide bridges follow: C277-C289 and C283-C297. N-linked (GlcNAc...) asparagine glycans are attached at residues N315, N331, and N370. The PAN domain maps to C328–S410. Disulfide bonds link C363/C384 and C367/C373. The helical transmembrane segment at I422 to F442 threads the bilayer. At W443 to R802 the chain is on the cytoplasmic side. The Protein kinase domain maps to F489–F774. Residues L495–V503 and K517 contribute to the ATP site. S523 and S538 each carry phosphoserine. The caM-binding stretch occupies residues R578–I595. D614 (proton acceptor) is an active-site residue. Phosphoserine is present on residues S618 and S631. T648 carries the post-translational modification Phosphothreonine. Position 691 is a phosphoserine (S691).

It belongs to the protein kinase superfamily. Ser/Thr protein kinase family.

The protein resides in the cell membrane. It carries out the reaction L-seryl-[protein] + ATP = O-phospho-L-seryl-[protein] + ADP + H(+). It catalyses the reaction L-threonyl-[protein] + ATP = O-phospho-L-threonyl-[protein] + ADP + H(+). The protein is G-type lectin S-receptor-like serine/threonine-protein kinase At1g61550 of Arabidopsis thaliana (Mouse-ear cress).